The sequence spans 355 residues: 6-aminohexanoate-oligomer endohydrolase (355 aa).

T267 functions as the Nucleophile in the catalytic mechanism.

It belongs to the peptidase S58 family. As to quaternary structure, heterotetramer composed of 4 alpha/beta heterodimers. In terms of processing, expressed as an inactive precursor that is cleaved autocatalytically at Asn266/Thr267 to generate an active enzyme composed of an alpha subunit and a beta subunit.

It catalyses the reaction [N-(6-aminohexanoyl)]n + H2O = [N-(6-aminohexanoyl)]n-x + [N-(6-aminohexanoyl)]x.. The protein operates within xenobiotic degradation; nylon-6 oligomer degradation. Involved in the degradation of nylon-6 oligomers. Degrades cyclic and linear oligomers of 6-aminohexanoate (Ahx) with a degree of polymerization greater than three by an endo-type mode. Cannot use Ahx cyclic dimer or the Ahx linear dimer. The sequence is that of 6-aminohexanoate-oligomer endohydrolase from Agromyces sp. (strain KY5R).